An 86-amino-acid chain; its full sequence is MATDAQMAQVAELEVEMMSDMYRRMTNACQAKCIATAFKESELTKGEAVCLDRCVAKYLDVHEKLGKRLTSMSQGDEAALQKIAQQ.

Positions 29–54 (CQAKCIATAFKESELTKGEAVCLDRC) match the Twin CX3C motif motif. Disulfide bonds link cysteine 29–cysteine 54 and cysteine 33–cysteine 50.

The protein belongs to the small Tim family. As to quaternary structure, heterohexamer; composed of 3 copies of tim-9/tin-9.1 and 3 copies of tim-10/tin-10, named soluble 70 kDa complex. The complex associates with the tim-22 component of the TIM22 complex. Interacts with multi-pass transmembrane proteins in transit.

Its subcellular location is the mitochondrion inner membrane. Mitochondrial intermembrane chaperone that participates in the import and insertion of multi-pass transmembrane proteins into the mitochondrial inner membrane. May also be required for the transfer of beta-barrel precursors from the TOM complex to the sorting and assembly machinery (SAM complex) of the outer membrane. Acts as a chaperone-like protein that protects the hydrophobic precursors from aggregation and guide them through the mitochondrial intermembrane space. This is Mitochondrial import inner membrane translocase subunit Tim10 (tin-10) from Caenorhabditis briggsae.